The chain runs to 159 residues: SsrA-binding protein (159 aa).

Belongs to the SmpB family.

Its subcellular location is the cytoplasm. Functionally, required for rescue of stalled ribosomes mediated by trans-translation. Binds to transfer-messenger RNA (tmRNA), required for stable association of tmRNA with ribosomes. tmRNA and SmpB together mimic tRNA shape, replacing the anticodon stem-loop with SmpB. tmRNA is encoded by the ssrA gene; the 2 termini fold to resemble tRNA(Ala) and it encodes a 'tag peptide', a short internal open reading frame. During trans-translation Ala-aminoacylated tmRNA acts like a tRNA, entering the A-site of stalled ribosomes, displacing the stalled mRNA. The ribosome then switches to translate the ORF on the tmRNA; the nascent peptide is terminated with the 'tag peptide' encoded by the tmRNA and targeted for degradation. The ribosome is freed to recommence translation, which seems to be the essential function of trans-translation. The polypeptide is SsrA-binding protein (Actinobacillus pleuropneumoniae serotype 5b (strain L20)).